Here is a 450-residue protein sequence, read N- to C-terminus: Glucose-6-phosphate isomerase (450 aa).

T39 is modified (phosphothreonine). The Proton donor role is filled by E291. Active-site residues include H312 and K426.

Belongs to the GPI family.

It localises to the cytoplasm. It catalyses the reaction alpha-D-glucose 6-phosphate = beta-D-fructose 6-phosphate. It functions in the pathway carbohydrate biosynthesis; gluconeogenesis. The protein operates within carbohydrate degradation; glycolysis; D-glyceraldehyde 3-phosphate and glycerone phosphate from D-glucose: step 2/4. Functionally, catalyzes the reversible isomerization of glucose-6-phosphate to fructose-6-phosphate. This Halalkalibacterium halodurans (strain ATCC BAA-125 / DSM 18197 / FERM 7344 / JCM 9153 / C-125) (Bacillus halodurans) protein is Glucose-6-phosphate isomerase.